The primary structure comprises 329 residues: VSG expression site-associated protein 221A (329 aa).

The first 23 residues, 1 to 23 (MKVEIVELVVLLFSVTCVDAWLQ), serve as a signal peptide directing secretion. N-linked (GlcNAc...) asparagine glycans are attached at residues Asn73, Asn294, and Asn308.

Its function is as follows. Not known but may be related to activation of the variant surface glycoprotein genes. This chain is VSG expression site-associated protein 221A, found in Trypanosoma brucei brucei.